The sequence spans 336 residues: MIQKNWQELIKPNKVDFTSSGRTKATLVAEPLERGFGLTLGNALRRVLLSSLRGAAVTAVQIDGVLHEFSSIPGVREDVTDIVLNIKEIAIKMDGDDSKRMVVRKQGPGVVTAGDIQTVGDIEILNPNHVICTLDEGAEIRMEFTVNNGKGYVPAERNRSEDAPIGLIPVDSLYSPVKKVSYKVENTREGQVLDYDKLTMSIETDGSVTGEDAIAFAARILQDQLSVFVNFDEPQKEAEEEAVTELAFNPALLKKVDELELSVRSANCLKNDNIVYIGDLIQKTEAEMLRTPNFGRKSLNEIKEVLASMGLHLGMEVPSWPPENIEDLAKRYEDQY.

Positions methionine 1–aspartate 232 are alpha N-terminal domain (alpha-NTD). Residues phenylalanine 248 to tyrosine 336 form an alpha C-terminal domain (alpha-CTD) region.

This sequence belongs to the RNA polymerase alpha chain family. Homodimer. The RNAP catalytic core consists of 2 alpha, 1 beta, 1 beta' and 1 omega subunit. When a sigma factor is associated with the core the holoenzyme is formed, which can initiate transcription.

It carries out the reaction RNA(n) + a ribonucleoside 5'-triphosphate = RNA(n+1) + diphosphate. DNA-dependent RNA polymerase catalyzes the transcription of DNA into RNA using the four ribonucleoside triphosphates as substrates. The sequence is that of DNA-directed RNA polymerase subunit alpha from Sinorhizobium fredii (strain NBRC 101917 / NGR234).